Here is a 185-residue protein sequence, read N- to C-terminus: Threonylcarbamoyl-AMP synthase (185 aa).

The YrdC-like domain maps to 4 to 185; sequence SWRVQQAAQN…IATGQVMRAG (182 aa).

This sequence belongs to the SUA5 family. TsaC subfamily.

It localises to the cytoplasm. It carries out the reaction L-threonine + hydrogencarbonate + ATP = L-threonylcarbamoyladenylate + diphosphate + H2O. In terms of biological role, required for the formation of a threonylcarbamoyl group on adenosine at position 37 (t(6)A37) in tRNAs that read codons beginning with adenine. Catalyzes the conversion of L-threonine, HCO(3)(-)/CO(2) and ATP to give threonylcarbamoyl-AMP (TC-AMP) as the acyladenylate intermediate, with the release of diphosphate. The protein is Threonylcarbamoyl-AMP synthase of Pseudomonas syringae pv. tomato (strain ATCC BAA-871 / DC3000).